The chain runs to 370 residues: Proto-oncogene Wnt-1 (370 aa).

The signal sequence occupies residues 1–27; that stretch reads MGLWALLPSWVSTTLLLALTALPAALA. N-linked (GlcNAc...) asparagine glycosylation is present at asparagine 29. Disulfide bonds link cysteine 93/cysteine 104, cysteine 143/cysteine 151, cysteine 153/cysteine 170, cysteine 218/cysteine 232, cysteine 220/cysteine 227, cysteine 299/cysteine 330, cysteine 315/cysteine 325, cysteine 329/cysteine 369, cysteine 345/cysteine 360, cysteine 347/cysteine 357, and cysteine 352/cysteine 353. Serine 224 is lipidated: O-palmitoleoyl serine; by PORCN. Asparagine 316 and asparagine 346 each carry an N-linked (GlcNAc...) asparagine glycan. Asparagine 359 carries an N-linked (GlcNAc...) asparagine glycan.

The protein belongs to the Wnt family. In terms of assembly, forms a soluble 1:1 complex with AFM; this prevents oligomerization and is required for prolonged biological activity. The complex with AFM may represent the physiological form in body fluids. Interacts with PORCN. Interacts with RSPO1, RSPO2 and RSPO3. Interacts with WLS. Palmitoleoylation is required for efficient binding to frizzled receptors. Palmitoleoylation is necessary for proper trafficking to cell surface. Depalmitoleoylated by NOTUM, leading to inhibit Wnt signaling pathway. As to expression, testis and mid-gestational embryos. In the testis, detected only in postmeiotic germ cells undergoing differentiation from round spermatids into mature spermatozoa. In the embryos, expression is restricted to the developing CNS in regions of the neural tube other than the telencephalon. Expressed in osteoblast; expression levels increase with advancing osteoblast differentiation. Expressed in the brain, femur, spleen, and hematopoietic bone marrow.

Its subcellular location is the secreted. The protein localises to the extracellular space. It localises to the extracellular matrix. Ligand for members of the frizzled family of seven transmembrane receptors. Acts in the canonical Wnt signaling pathway by promoting beta-catenin-dependent transcriptional activation. In some developmental processes, is also a ligand for the coreceptor RYK, thus triggering Wnt signaling. Plays an essential role in the development of the embryonic brain and central nervous system (CNS). Has a role in osteoblast function, bone development and bone homeostasis. The chain is Proto-oncogene Wnt-1 (Wnt1) from Mus musculus (Mouse).